The following is a 43-amino-acid chain: Photosystem I reaction center subunit IX (43 aa).

Residues 7–27 (YLSTAPVLSTIWFGSLAGLLI) traverse the membrane as a helical segment.

This sequence belongs to the PsaJ family.

The protein resides in the plastid. The protein localises to the chloroplast thylakoid membrane. May help in the organization of the PsaE and PsaF subunits. The polypeptide is Photosystem I reaction center subunit IX (Vitis vinifera (Grape)).